An 816-amino-acid chain; its full sequence is Phosphatidylinositol 4-kinase beta (816 aa).

3 disordered regions span residues 1–30 (MGDTVVEPAPLKPTSEPTSGPPGNNGGSLL), 99–120 (EEEDEMGASVASGTAKGARRRR), and 248–318 (AHRK…SFSS). The residue at position 2 (glycine 2) is an N-acetylglycine. Residues 2-68 (GDTVVEPAPL…VKLLHGGVAV (67 aa)) are interaction with ACBD3. One can recognise a PIK helical domain in the interval 52 to 242 (CQDVLEKVKL…GTKLRKLILS (191 aa)). Serine 258 is modified (phosphoserine). Threonine 263 is subject to Phosphothreonine. Serine 266, serine 275, serine 277, serine 284, and serine 294 each carry phosphoserine. Polar residues-rich tracts occupy residues 278 to 297 (DATASISLSSNLKRTASNPK) and 306 to 318 (SSSTESIDNSFSS). Serine 428 is subject to Phosphoserine. Residue threonine 438 is modified to Phosphothreonine. Serine 511 is subject to Phosphoserine. Residues threonine 517 and threonine 519 each carry the phosphothreonine modification. Residues 535–801 (EPWQEKVRRI…MVDGSMRSIT (267 aa)) form the PI3K/PI4K catalytic domain. Residues 541–547 (VRRIREG) are G-loop. Residues 668-676 (QVKDRHNGN) form a catalytic loop region. An activation loop region spans residues 687 to 711 (HIDFGFILSSSPRNLGFETSAFKLT).

Belongs to the PI3/PI4-kinase family. Type III PI4K subfamily. Interacts with ARF1 and ARF3 in the Golgi complex, but not with ARF4, ARF5 or ARF6. Interacts with NCS1/FREQ in a calcium-independent manner. Interacts with CALN1/CABP8 and CALN2/CABP7; in a calcium-dependent manner; this interaction competes with NCS1/FREQ binding. Interacts with ACBD3. Interacts with ARMH3, YWHAB, YWHAE, YWHAG, YWHAH, YWHAQ, YWHAZ and SFN. Interacts with GGA2 (via VHS domain); the interaction is important for PI4KB location at the Golgi apparatus membrane. Interacts with ATG9A. Mg(2+) serves as cofactor. The cofactor is Mn(2+).

The protein resides in the endomembrane system. It is found in the mitochondrion outer membrane. The protein localises to the rough endoplasmic reticulum membrane. It localises to the golgi apparatus. Its subcellular location is the golgi apparatus membrane. The catalysed reaction is a 1,2-diacyl-sn-glycero-3-phospho-(1D-myo-inositol) + ATP = a 1,2-diacyl-sn-glycero-3-phospho-(1D-myo-inositol 4-phosphate) + ADP + H(+). Inhibited by wortmannin. Increased kinase activity upon interaction with NCS1/FREQ. In terms of biological role, phosphorylates phosphatidylinositol (PI) in the first committed step in the production of the second messenger inositol-1,4,5,-trisphosphate (PIP). May regulate Golgi disintegration/reorganization during mitosis, possibly via its phosphorylation. Involved in Golgi-to-plasma membrane trafficking. In Callithrix jacchus (White-tufted-ear marmoset), this protein is Phosphatidylinositol 4-kinase beta (PI4KB).